Here is a 350-residue protein sequence, read N- to C-terminus: Galactokinase (350 aa).

A substrate-binding site is contributed by 14–17 (EHTD). Residues Ser-46 and 96 to 102 (GAGLSSS) contribute to the ATP site. 2 residues coordinate Mg(2+): Ser-102 and Glu-134. Asp-146 functions as the Proton acceptor in the catalytic mechanism. Position 196 (Tyr-196) interacts with substrate.

The protein belongs to the GHMP kinase family. GalK subfamily.

It is found in the cytoplasm. The enzyme catalyses alpha-D-galactose + ATP = alpha-D-galactose 1-phosphate + ADP + H(+). It participates in carbohydrate metabolism; galactose metabolism. Functionally, catalyzes the transfer of the gamma-phosphate of ATP to D-galactose to form alpha-D-galactose-1-phosphate (Gal-1-P). The protein is Galactokinase of Thermotoga neapolitana.